Here is a 568-residue protein sequence, read N- to C-terminus: Potassium-transporting ATPase potassium-binding subunit (568 aa).

The next 10 membrane-spanning stretches (helical) occupy residues 1-21 (MWLT…LAVP), 60-80 (GLAL…LLRA), 129-149 (AITF…AGFI), 174-194 (VMLP…VPQA), 251-271 (IHIL…GSML), 278-298 (WVLF…VFTA), 381-401 (VGLI…GMMI), 420-440 (VMLA…LAAV), 488-508 (IGLA…ALAG), and 528-548 (PLFM…TFLP).

The protein belongs to the KdpA family. The system is composed of three essential subunits: KdpA, KdpB and KdpC.

Its subcellular location is the cell inner membrane. Part of the high-affinity ATP-driven potassium transport (or Kdp) system, which catalyzes the hydrolysis of ATP coupled with the electrogenic transport of potassium into the cytoplasm. This subunit binds the periplasmic potassium ions and delivers the ions to the membrane domain of KdpB through an intramembrane tunnel. This chain is Potassium-transporting ATPase potassium-binding subunit, found in Delftia acidovorans (strain DSM 14801 / SPH-1).